Reading from the N-terminus, the 102-residue chain is Small ribosomal subunit protein uS10 (102 aa).

Belongs to the universal ribosomal protein uS10 family. In terms of assembly, part of the 30S ribosomal subunit.

Its function is as follows. Involved in the binding of tRNA to the ribosomes. The chain is Small ribosomal subunit protein uS10 from Thermobifida fusca (strain YX).